We begin with the raw amino-acid sequence, 186 residues long: Peptidyl-tRNA hydrolase (186 aa).

TRNA is bound at residue Tyr-14. His-19 serves as the catalytic Proton acceptor. 3 residues coordinate tRNA: Tyr-61, Asn-63, and Asn-107.

This sequence belongs to the PTH family. In terms of assembly, monomer.

Its subcellular location is the cytoplasm. The catalysed reaction is an N-acyl-L-alpha-aminoacyl-tRNA + H2O = an N-acyl-L-amino acid + a tRNA + H(+). In terms of biological role, hydrolyzes ribosome-free peptidyl-tRNAs (with 1 or more amino acids incorporated), which drop off the ribosome during protein synthesis, or as a result of ribosome stalling. Its function is as follows. Catalyzes the release of premature peptidyl moieties from peptidyl-tRNA molecules trapped in stalled 50S ribosomal subunits, and thus maintains levels of free tRNAs and 50S ribosomes. This is Peptidyl-tRNA hydrolase from Helicobacter pylori (strain P12).